Reading from the N-terminus, the 370-residue chain is Aspartate-semialdehyde dehydrogenase 1 (370 aa).

NADP(+)-binding positions include 9 to 12 (RGMV), 36 to 37 (TS), and Gln-72. Residue Arg-101 coordinates phosphate. Cys-134 acts as the Acyl-thioester intermediate in catalysis. Cys-134 is modified (S-cysteinyl cysteine; in inhibited form). Substrate is bound at residue Gln-161. Residues 164–165 (SG) and Pro-192 contribute to the NADP(+) site. Substrate is bound at residue Glu-240. Residue Lys-243 coordinates phosphate. Residue Arg-267 participates in substrate binding. His-274 functions as the Proton acceptor in the catalytic mechanism. Gln-350 contributes to the NADP(+) binding site.

This sequence belongs to the aspartate-semialdehyde dehydrogenase family. Homodimer.

It carries out the reaction L-aspartate 4-semialdehyde + phosphate + NADP(+) = 4-phospho-L-aspartate + NADPH + H(+). It participates in amino-acid biosynthesis; L-lysine biosynthesis via DAP pathway; (S)-tetrahydrodipicolinate from L-aspartate: step 2/4. The protein operates within amino-acid biosynthesis; L-methionine biosynthesis via de novo pathway; L-homoserine from L-aspartate: step 2/3. It functions in the pathway amino-acid biosynthesis; L-threonine biosynthesis; L-threonine from L-aspartate: step 2/5. Its activity is regulated as follows. Inhibited by S-methyl-L-cysteine sulfoxide in vitro, via the formation of a covalently bound cysteine at the active site Cys-134. Its function is as follows. Catalyzes the NADPH-dependent formation of L-aspartate-semialdehyde (L-ASA) by the reductive dephosphorylation of L-aspartyl-4-phosphate. This chain is Aspartate-semialdehyde dehydrogenase 1 (asd1), found in Vibrio cholerae serotype O1 (strain ATCC 39315 / El Tor Inaba N16961).